Here is a 228-residue protein sequence, read N- to C-terminus: Ankyrin repeat domain-containing protein 46 (228 aa).

ANK repeat units lie at residues 11 to 40 (QTNV…DPNI), 44 to 74 (RGRT…PLAT), 77 to 103 (QGNT…KIDI), and 107 to 138 (QGAT…EVKG). A helical transmembrane segment spans residues 195-215 (VLLLILVIALLSLGIAYYVSG).

It localises to the membrane. This is Ankyrin repeat domain-containing protein 46 (Ankrd46) from Rattus norvegicus (Rat).